The primary structure comprises 365 residues: 2-aminoethylphosphonate--pyruvate transaminase (365 aa).

K194 is modified (N6-(pyridoxal phosphate)lysine).

This sequence belongs to the class-V pyridoxal-phosphate-dependent aminotransferase family. PhnW subfamily. Homodimer. Pyridoxal 5'-phosphate serves as cofactor.

It catalyses the reaction (2-aminoethyl)phosphonate + pyruvate = phosphonoacetaldehyde + L-alanine. In terms of biological role, involved in phosphonate degradation. This is 2-aminoethylphosphonate--pyruvate transaminase from Bacillus cereus (strain ATCC 10987 / NRS 248).